The sequence spans 1260 residues: Neural cell adhesion molecule L1 (1260 aa).

An N-terminal signal peptide occupies residues 1–19 (MVVMLRYVWPLLLCSPCLL). Residues 20–1123 (IQIPDEYKGH…VSTTGSFASE (1104 aa)) lie on the Extracellular side of the membrane. 6 Ig-like C2-type domains span residues 35 to 130 (PVIT…IQLV), 138 to 225 (PKET…EPID), 239 to 327 (PRLL…YYVT), 332 to 419 (PYWL…AYIY), 424 to 506 (PARI…NNVT), and 517 to 600 (TQIT…DEVE). 2 disulfide bridges follow: Cys-57-Cys-113 and Cys-157-Cys-208. Asn-100, Asn-202, Asn-246, and Asn-293 each carry an N-linked (GlcNAc...) asparagine glycan. 2 disulfides stabilise this stretch: Cys-263-Cys-311 and Cys-353-Cys-403. 4 N-linked (GlcNAc...) asparagine glycosylation sites follow: Asn-432, Asn-478, Asn-489, and Asn-504. Cys-447 and Cys-496 are oxidised to a cystine. A disulfide bridge links Cys-538 with Cys-590. Short sequence motifs (cell attachment site) lie at residues 553–555 (RGD) and 562–564 (RGD). 2 N-linked (GlcNAc...) asparagine glycosylation sites follow: Asn-587 and Asn-670. 5 Fibronectin type-III domains span residues 613 to 711 (PVPH…TPEA), 716 to 809 (NPVD…SGED), 811 to 916 (PQVS…PEGV), 919 to 1015 (HPEA…MALF), and 1014 to 1112 (LFGK…TGPV). The tract at residues 697 to 724 (GEPSPVSESVVTPEAAPEKNPVDVRGEG) is disordered. Residues 712 to 724 (APEKNPVDVRGEG) show a composition bias toward basic and acidic residues. Residues Asn-725, Asn-776, Asn-824, Asn-848, Asn-875, Asn-968, Asn-978, Asn-1022, Asn-1030, Asn-1073, and Asn-1107 are each glycosylated (N-linked (GlcNAc...) asparagine). Residues 1124–1146 (GWFIAFVSAIILLLLILLILCFI) form a helical membrane-spanning segment. The Cytoplasmic segment spans residues 1147 to 1260 (KRSKGGKYSV…SPINPAVALE (114 aa)). Residues Ser-1166, Ser-1181, Ser-1184, Ser-1197, Ser-1246, Ser-1247, and Ser-1251 each carry the phosphoserine modification. 2 disordered regions span residues 1183-1210 (ESDN…SDDS) and 1229-1260 (IGQY…VALE). Polar residues predominate over residues 1244–1253 (NDSSGATSPI).

Belongs to the immunoglobulin superfamily. L1/neurofascin/NgCAM family. As to quaternary structure, interacts with SHTN1; the interaction occurs in axonal growth cones. Interacts with isoform 2 of BSG. Expressed in the brain, including in the molecular layer of the cerebellar cortex, the fiber-rich layers of the hippocampus (alveus, and strata lacunosum moleculare, radiatum, and oriens), the nerve fiber layer and the inner and outer plexiform layers of the retina, and in the molecular layer of the olfactory bulb (at protein level).

The protein localises to the cell membrane. Its subcellular location is the cell projection. It is found in the growth cone. Its function is as follows. Neural cell adhesion molecule involved in the dynamics of cell adhesion and in the generation of transmembrane signals at tyrosine kinase receptors. During brain development, critical in multiple processes, including neuronal migration, axonal growth and fasciculation, and synaptogenesis. In the mature brain, plays a role in the dynamics of neuronal structure and function, including synaptic plasticity. The chain is Neural cell adhesion molecule L1 (L1cam) from Mus musculus (Mouse).